Here is a 171-residue protein sequence, read N- to C-terminus: UPF0763 protein KHP_0657 (171 aa).

This sequence belongs to the UPF0763 family.

This Helicobacter pylori (strain 51) protein is UPF0763 protein KHP_0657.